Consider the following 207-residue polypeptide: Ras-related protein Rab-5B (207 aa).

Gly-2 is lipidated: N-myristoyl glycine. Residues 41 to 49, 60 to 66, 90 to 94, 148 to 151, and 176 to 178 contribute to the GTP site; these read GDSGVGKSS, SEKHQVT, DTGGQ, NKKD, and SAK. The Effector region signature appears at 63–71; the sequence is HQVTIGAAF.

Belongs to the small GTPase superfamily. Rab family. As to quaternary structure, interacts with CK1. May interact with ARF1. In terms of processing, myristoylation is required for cell membrane and food vacuole membrane localization. Post-translationally, may be palmitoylated on Cys-3. Lacks the C-terminal cysteine motifs subject to isoprenylation present in mammalian RAB5B homolog.

It is found in the cell membrane. It localises to the vacuole membrane. The protein localises to the vesicle. The enzyme catalyses GTP + H2O = GDP + phosphate + H(+). With respect to regulation, alternates between an inactive GDP-bound form and an active GTP-bound form. Activated by guanine nucleotide-exchange factors (GEFs) and inactivated by GTPase-activating proteins (GAPs). Small GTPase which regulates vesicle trafficking between organelles. May be involved in the trafficking of the N-myristoylated AK2 from the endoplasmic reticulum to the parasitophorous vacuole membrane. The sequence is that of Ras-related protein Rab-5B from Plasmodium falciparum (isolate 3D7).